Consider the following 95-residue polypeptide: Aspartyl/glutamyl-tRNA(Asn/Gln) amidotransferase subunit C (95 aa).

The protein belongs to the GatC family. As to quaternary structure, heterotrimer of A, B and C subunits.

The enzyme catalyses L-glutamyl-tRNA(Gln) + L-glutamine + ATP + H2O = L-glutaminyl-tRNA(Gln) + L-glutamate + ADP + phosphate + H(+). The catalysed reaction is L-aspartyl-tRNA(Asn) + L-glutamine + ATP + H2O = L-asparaginyl-tRNA(Asn) + L-glutamate + ADP + phosphate + 2 H(+). Allows the formation of correctly charged Asn-tRNA(Asn) or Gln-tRNA(Gln) through the transamidation of misacylated Asp-tRNA(Asn) or Glu-tRNA(Gln) in organisms which lack either or both of asparaginyl-tRNA or glutaminyl-tRNA synthetases. The reaction takes place in the presence of glutamine and ATP through an activated phospho-Asp-tRNA(Asn) or phospho-Glu-tRNA(Gln). This Dehalococcoides mccartyi (strain ATCC BAA-2266 / KCTC 15142 / 195) (Dehalococcoides ethenogenes (strain 195)) protein is Aspartyl/glutamyl-tRNA(Asn/Gln) amidotransferase subunit C.